A 135-amino-acid polypeptide reads, in one-letter code: UPF0299 membrane protein YE2790 (135 aa).

The next 4 membrane-spanning stretches (helical) occupy residues 4 to 24 (VTSL…CLWA), 30 to 50 (LLLP…FALL), 63 to 83 (GCHL…VGVM), and 93 to 113 (FGPI…VVGY).

This sequence belongs to the UPF0299 family.

The protein localises to the cell inner membrane. The protein is UPF0299 membrane protein YE2790 of Yersinia enterocolitica serotype O:8 / biotype 1B (strain NCTC 13174 / 8081).